The following is an 89-amino-acid chain: Small ribosomal subunit protein uS15 (89 aa).

The span at 1–11 shows a compositional bias: basic and acidic residues; sequence MSITAERKAEV. Positions 1-24 are disordered; that stretch reads MSITAERKAEVIKTNAKKAGDTGS.

This sequence belongs to the universal ribosomal protein uS15 family. In terms of assembly, part of the 30S ribosomal subunit. Forms a bridge to the 50S subunit in the 70S ribosome, contacting the 23S rRNA.

In terms of biological role, one of the primary rRNA binding proteins, it binds directly to 16S rRNA where it helps nucleate assembly of the platform of the 30S subunit by binding and bridging several RNA helices of the 16S rRNA. Forms an intersubunit bridge (bridge B4) with the 23S rRNA of the 50S subunit in the ribosome. This is Small ribosomal subunit protein uS15 from Afipia carboxidovorans (strain ATCC 49405 / DSM 1227 / KCTC 32145 / OM5) (Oligotropha carboxidovorans).